We begin with the raw amino-acid sequence, 464 residues long: UDP-N-acetylmuramoylalanine--D-glutamate ligase (464 aa).

127–133 (GSNGKST) serves as a coordination point for ATP.

Belongs to the MurCDEF family.

The protein resides in the cytoplasm. The catalysed reaction is UDP-N-acetyl-alpha-D-muramoyl-L-alanine + D-glutamate + ATP = UDP-N-acetyl-alpha-D-muramoyl-L-alanyl-D-glutamate + ADP + phosphate + H(+). It participates in cell wall biogenesis; peptidoglycan biosynthesis. Cell wall formation. Catalyzes the addition of glutamate to the nucleotide precursor UDP-N-acetylmuramoyl-L-alanine (UMA). The polypeptide is UDP-N-acetylmuramoylalanine--D-glutamate ligase (Dinoroseobacter shibae (strain DSM 16493 / NCIMB 14021 / DFL 12)).